Here is a 414-residue protein sequence, read N- to C-terminus: uncharacterized protein (414 aa).

3 disordered regions span residues 136-168, 297-333, and 346-414; these read SSKSMTPTAEKQLEKPLENGSELQEGDSLTVPT, PQNFPNSGMQRAVQAPRPQNKMSYHRNNKNRNAENAS, and ALNA…NGSK. Residues 350-359 are compositionally biased toward polar residues; it reads PSRSRPTHGS. The span at 399–414 shows a compositional bias: basic and acidic residues; it reads SKSEKIYPEPRRNGSK.

This is an uncharacterized protein from Homo sapiens (Human).